Consider the following 154-residue polypeptide: MALPVYAMSCFRLSKLLCKKLTSAMTEFWWSSCENKRKISWVAWQKLCKSKEDDGGLGFRDLGWFNQALLAKQSFRIIHQPHTLLSRLLRSRYFPHSSMMECSVGTRPSYAWRSIIHGRELLSRGLLRTIGDGIHTKVWLDRWIMDETPLPPLN.

It localises to the mitochondrion. This is an uncharacterized protein from Arabidopsis thaliana (Mouse-ear cress).